We begin with the raw amino-acid sequence, 314 residues long: DNA-directed RNA polymerase subunit alpha (314 aa).

The interval 1-228 (MIEIEKPKIE…EHLNIFVGLT (228 aa)) is alpha N-terminal domain (alpha-NTD). The segment at 245–314 (KEKVLEMTIE…ELGLGLRKDD (70 aa)) is alpha C-terminal domain (alpha-CTD).

It belongs to the RNA polymerase alpha chain family. Homodimer. The RNAP catalytic core consists of 2 alpha, 1 beta, 1 beta' and 1 omega subunit. When a sigma factor is associated with the core the holoenzyme is formed, which can initiate transcription.

The enzyme catalyses RNA(n) + a ribonucleoside 5'-triphosphate = RNA(n+1) + diphosphate. Its function is as follows. DNA-dependent RNA polymerase catalyzes the transcription of DNA into RNA using the four ribonucleoside triphosphates as substrates. The protein is DNA-directed RNA polymerase subunit alpha of Bacillus licheniformis (strain ATCC 14580 / DSM 13 / JCM 2505 / CCUG 7422 / NBRC 12200 / NCIMB 9375 / NCTC 10341 / NRRL NRS-1264 / Gibson 46).